Consider the following 353-residue polypeptide: Putrescine N-methyltransferase 2 (353 aa).

A disordered region spans residues 15 to 50 (KSGAIPMNGHHNGTSKHQNGHKNGTSEQQNGTISLD). Over residues 25 to 50 (HNGTSKHQNGHKNGTSEQQNGTISLD) the composition is skewed to polar residues. The PABS domain maps to 64–301 (PGWFSEFSAL…GVIGYMLCST (238 aa)). Residues Q95, E170, and 201-202 (DG) each bind S-adenosyl-L-methionine. Residue D220 is the Proton acceptor of the active site. Y289 serves as a coordination point for S-adenosyl-L-methionine.

This sequence belongs to the class I-like SAM-binding methyltransferase superfamily. Putrescine methyltransferase family. As to expression, predominantly expressed in roots.

The enzyme catalyses putrescine + S-adenosyl-L-methionine = N-methylputrescine + S-adenosyl-L-homocysteine + H(+). The protein operates within alkaloid biosynthesis; nicotine biosynthesis. Its function is as follows. Involved in the biosynthesis of pyridine alkaloid natural products, leading mainly to the production of anabasine, anatabine, nicotine and nornicotine, effective deterrents against herbivores with antiparasitic and pesticide properties (neurotoxins); nornicotine serves as the precursor in the synthesis of the carcinogen compound N'-nitrosonornicotine (NNN). Methyltransferase that mediates the conversion of putrescine to N-methylputrescine. Promotes leaves ripening. The sequence is that of Putrescine N-methyltransferase 2 from Nicotiana tabacum (Common tobacco).